We begin with the raw amino-acid sequence, 341 residues long: Large ribosomal subunit protein uL3 (341 aa).

2 disordered regions span residues M1–S31 and H234–G261.

This sequence belongs to the universal ribosomal protein uL3 family. As to quaternary structure, part of the 50S ribosomal subunit. Forms a cluster with proteins L14 and L24e.

One of the primary rRNA binding proteins, it binds directly near the 3'-end of the 23S rRNA, where it nucleates assembly of the 50S subunit. This chain is Large ribosomal subunit protein uL3, found in Metallosphaera sedula (strain ATCC 51363 / DSM 5348 / JCM 9185 / NBRC 15509 / TH2).